The primary structure comprises 688 residues: Sciellin (688 aa).

Residues 1–25 show a composition bias toward polar residues; sequence MSNVTLRKMSPTGNEMKSTTQGTTR. The disordered stretch occupies residues 1-29; that stretch reads MSNVTLRKMSPTGNEMKSTTQGTTRKQQD. Residue Lys83 is modified to N6-acetyllysine. The interval 134-231 is disordered; it reads QPGGSLNANT…TNRSAERNIR (98 aa). Residues 140–154 are compositionally biased toward low complexity; the sequence is NANTSNTIASTSATT. Residues 186–195 are compositionally biased toward pro residues; the sequence is VHPPIPPKPS. 16 tandem repeats follow at residues 251–266, 267–286, 287–306, 307–326, 327–346, 347–366, 367–386, 387–406, 407–426, 427–446, 447–465, 466–484, 485–504, 505–523, 524–543, and 544–563. The 16 X approximate tandem repeats stretch occupies residues 251–563; the sequence is GEELDNLIKM…NSHVSENKNG (313 aa). Residue Ser289 is modified to Phosphoserine. The segment at 340-373 is disordered; it reads MNKTSRRSEDLDNATEVNPKGHENTTGKKDLDGL. Basic and acidic residues predominate over residues 358-373; it reads PKGHENTTGKKDLDGL. The residue at position 389 (Ser389) is a Phosphoserine. One can recognise an LIM zinc-binding domain in the interval 619–685; sequence DMCTYCRKPL…EPCYSKIMAK (67 aa).

Highly expressed in esophagus. It is also expressed in keratinocytes, amniotic tissue, foreskin stratum spinosum and stratum granulosum, hair follicle and nail.

The protein localises to the cytoplasm. It is found in the membrane. Its function is as follows. May function in the assembly or regulation of proteins in the cornified envelope. The LIM domain may be involved in homotypic or heterotypic associations and may function to localize sciellin to the cornified envelope. This chain is Sciellin (SCEL), found in Homo sapiens (Human).